Here is a 360-residue protein sequence, read N- to C-terminus: MQDRIRKIIHVDMDCFFAAVEMRDNPAYREIALAVGGHEKQRGVISTCNYQARKFGVRSAMPTAQALKLCPQLHVVPGRMSVYKSVSQQIQTIFQRYTSLIEPLSLDEAYLDVSESTAYQGSATLIAQAIRRDIWQELNLTASAGVAPIKFLAKVASDLNKPDGLYVVTPDKVQEMVDSLPLEKIPGVGKVALEKLHQAGLYVGADVRRADYRKLLHQFGRLGASLWKKSHGIDEREVVTERERKSVGVEYTFSQNISTFQECWQVIEQKLYPELDARLSRAHPQRGIIKQGIKVKFADFQQTTIEHVHPALELDYFHELLEQVLTRQQGREIRLLGLSVMLKPELQMKQLSMFPSDGWQ.

Residues 8-189 enclose the UmuC domain; that stretch reads IIHVDMDCFF…LPLEKIPGVG (182 aa). Residues D12 and D107 each contribute to the Mg(2+) site. E108 is an active-site residue.

It belongs to the DNA polymerase type-Y family. In terms of assembly, monomer. Mg(2+) is required as a cofactor.

It localises to the cytoplasm. It catalyses the reaction DNA(n) + a 2'-deoxyribonucleoside 5'-triphosphate = DNA(n+1) + diphosphate. Poorly processive, error-prone DNA polymerase involved in untargeted mutagenesis. Copies undamaged DNA at stalled replication forks, which arise in vivo from mismatched or misaligned primer ends. These misaligned primers can be extended by PolIV. Exhibits no 3'-5' exonuclease (proofreading) activity. May be involved in translesional synthesis, in conjunction with the beta clamp from PolIII. The sequence is that of DNA polymerase IV from Vibrio cholerae serotype O1 (strain ATCC 39315 / El Tor Inaba N16961).